Reading from the N-terminus, the 64-residue chain is Large ribosomal subunit protein bL32 (64 aa).

Over residues 1–15 (MAVPKRKVSKSRRDS) the composition is skewed to basic residues. Residues 1-21 (MAVPKRKVSKSRRDSRRAQTF) form a disordered region.

Belongs to the bacterial ribosomal protein bL32 family.

This Symbiobacterium thermophilum (strain DSM 24528 / JCM 14929 / IAM 14863 / T) protein is Large ribosomal subunit protein bL32.